Here is a 64-residue protein sequence, read N- to C-terminus: Large ribosomal subunit protein bL35 (64 aa).

Residues 1–14 are compositionally biased toward basic residues; sequence MKQKTHKGTAKRIK. Residues 1-48 form a disordered region; the sequence is MKQKTHKGTAKRIKVTGSGKLRREQANRRHLLEGKPSKRTRRLKGTED. Positions 21–36 are enriched in basic and acidic residues; sequence LRREQANRRHLLEGKP.

Belongs to the bacterial ribosomal protein bL35 family.

The chain is Large ribosomal subunit protein bL35 from Corynebacterium aurimucosum (strain ATCC 700975 / DSM 44827 / CIP 107346 / CN-1) (Corynebacterium nigricans).